The following is a 142-amino-acid chain: Ovocleidin-17 (142 aa).

3 disulfides stabilise this stretch: Cys-5–Cys-16, Cys-33–Cys-138, and Cys-113–Cys-130. The C-type lectin domain occupies 12-139 (TPGGCLGFFS…CTERNAFVCK (128 aa)). Residue Asn-59 is glycosylated (N-linked (GlcNAc...) asparagine). Phosphoserine is present on residues Ser-61 and Ser-67.

In terms of tissue distribution, expressed in the shell gland mucosa. Not detected in hen liver, magnum, isthmus, cartilage, bone or in egg white or yolk.

The protein localises to the secreted. The protein resides in the extracellular space. Its subcellular location is the extracellular matrix. May form proteinaceous networks during the construction of the eggshell which then may control the deposition of the mineral phase. This is Ovocleidin-17 from Gallus gallus (Chicken).